A 316-amino-acid polypeptide reads, in one-letter code: Polyprenyl transferase ausN (316 aa).

Transmembrane regions (helical) follow at residues 45 to 65 (VVGV…TFLL), 69 to 89 (VILS…NDLI), 108 to 128 (GAVS…CGGS), 129 to 149 (LLLL…FFAL), 163 to 183 (LILT…DMNP), 188 to 208 (IPTL…DIVY), 233 to 253 (DQIA…GGIL), 256 to 276 (LGIP…LRFL), and 296 to 316 (SCLL…CVRL).

This sequence belongs to the UbiA prenyltransferase family. The cofactor is Mg(2+).

Its subcellular location is the membrane. The catalysed reaction is 3,5-dimethylorsellinate + (2E,6E)-farnesyl diphosphate = (3R)-3-farnesyl-6-hydroxy-2,3,5-trimethyl-4-oxocyclohexa-1,5-diene-1-carboxylate + diphosphate + H(+). The protein operates within secondary metabolite biosynthesis; terpenoid biosynthesis. In terms of biological role, polyprenyl transferase; part of the gene cluster A that mediates the biosynthesis of the fungal meroterpenoid acetoxydehydroaustin. The first step of the pathway is the synthesis of 3,5-dimethylorsellinic acid by the polyketide synthase ausA. 3,5-dimethylorsellinic acid is then prenylated by the polyprenyl transferase ausN. Further epoxidation by the FAD-dependent monooxygenase ausM and cyclization by the probable terpene cyclase ausL lead to the formation of protoaustinoid A. Protoaustinoid A is then oxidized to spiro-lactone preaustinoid A3 by the combined action of the FAD-binding monooxygenases ausB and ausC, and the dioxygenase ausE. Acid-catalyzed keto-rearrangement and ring contraction of the tetraketide portion of preaustinoid A3 by ausJ lead to the formation of preaustinoid A4. The aldo-keto reductase ausK, with the help of ausH, is involved in the next step by transforming preaustinoid A4 into isoaustinone which is in turn hydroxylated by the P450 monooxygenase ausI to form austinolide. The cytochrome P450 monooxygenase ausG then modifies austinolide to austinol. Austinol is further acetylated to austin by the O-acetyltransferase ausP, which spontaneously changes to dehydroaustin. The cytochrome P450 monooxygenase then converts dehydroaustin is into 7-dehydrodehydroaustin. The hydroxylation catalyzed by ausR permits the second O-acetyltransferase ausQ to add an additional acetyl group to the molecule, leading to the formation of acetoxydehydroaustin. Due to genetic rearrangements of the clusters and the subsequent loss of some enzymes, the end product of the Penicillium brasilianum austinoid biosynthesis clusters is acetoxydehydroaustin. The protein is Polyprenyl transferase ausN of Penicillium brasilianum.